Here is a 125-residue protein sequence, read N- to C-terminus: MKSFIVALCVVGCVLANDPEAVVVRNDYVQNPEGSYNYAFESNNGISGQAEGKFKVFDKDSAAVVVAGSSQYKGSDGKVYSLTYVADENGYQPQADFLPTPPPTVAIPEYIARAVAYNLAHSAKV.

Residues 1–16 (MKSFIVALCVVGCVLA) form the signal peptide. The region spanning 33-102 (EGSYNYAFES…PQADFLPTPP (70 aa)) is the Chitin-binding type R&amp;R domain.

Functionally, component of the cuticle of the larva of tobacco hornworm. This Manduca sexta (Tobacco hawkmoth) protein is Larval cuticle protein LCP-14 (LCP-14).